The primary structure comprises 192 residues: E3 ubiquitin-protein ligase RNF185 (192 aa).

Over residues 1–13 (MASKGPSASASTE) the composition is skewed to polar residues. The disordered stretch occupies residues 1–30 (MASKGPSASASTENSNAGGPSGSSNGTGES). Residues 1-130 (MASKGPSASA…GGFQGFGFGD (130 aa)) lie on the Cytoplasmic side of the membrane. The segment covering 14–27 (NSNAGGPSGSSNGT) has biased composition (low complexity). The required for ubiquitin ligase activity and protection against ER stress-induced cell death stretch occupies residues 29–80 (ESGGQDSTFECNICLDTAKDAVISLCGHLFCWPCLHQWLETRPNRQVCPVCK). The RING-type zinc-finger motif lies at 39-80 (CNICLDTAKDAVISLCGHLFCWPCLHQWLETRPNRQVCPVCK). A disordered region spans residues 90–123 (PLYGRGSTGQQDPREKTPPRPQGQRPEPENRGGF). The chain crosses the membrane as a helical span at residues 131–151 (GGFQMSFGIGAFPFGIFATAF). At 152–171 (NINDGRPPPAVPGTPQYVDE) the chain is on the mitochondrial intermembrane side. A helical membrane pass occupies residues 172-192 (QFLSRLFLFVALVIMFWLLIA).

Interacts with ATG5 and BNIP1. In terms of tissue distribution, ubiquitously expressed with high expression in testis.

It is found in the mitochondrion outer membrane. The protein localises to the endoplasmic reticulum membrane. The catalysed reaction is S-ubiquitinyl-[E2 ubiquitin-conjugating enzyme]-L-cysteine + [acceptor protein]-L-lysine = [E2 ubiquitin-conjugating enzyme]-L-cysteine + N(6)-ubiquitinyl-[acceptor protein]-L-lysine.. Its pathway is protein modification; protein ubiquitination. E3 ubiquitin-protein ligase that regulates selective mitochondrial autophagy by mediating 'Lys-63'-linked polyubiquitination of BNIP1. Acts in the endoplasmic reticulum (ER)-associated degradation (ERAD) pathway, which targets misfolded proteins that accumulate in the endoplasmic reticulum (ER) for ubiquitination and subsequent proteasome-mediated degradation. Protects cells from ER stress-induced apoptosis. Responsible for the cotranslational ubiquitination and degradation of CFTR in the ERAD pathway. Also acts as a regulator of the innate antiviral response by catalyzing 'Lys-27'-linked polyubiquitination of CGAS, thereby promoting CGAS cyclic GMP-AMP synthase activity. Preferentially associates with the E2 enzymes UBE2J1 and UBE2J2. The polypeptide is E3 ubiquitin-protein ligase RNF185 (Rnf185) (Mus musculus (Mouse)).